Consider the following 498-residue polypeptide: uncharacterized protein (498 aa).

Transmembrane regions (helical) follow at residues leucine 54–leucine 74, valine 100–valine 120, methionine 128–serine 148, glycine 150–leucine 170, serine 188–leucine 208, tryptophan 221–leucine 241, valine 302–leucine 322, tyrosine 326–serine 346, alanine 353–serine 373, threonine 381–leucine 401, and alanine 446–leucine 466.

This sequence belongs to the major facilitator superfamily. Allantoate permease family.

Its subcellular location is the membrane. This is an uncharacterized protein from Schizosaccharomyces pombe (strain 972 / ATCC 24843) (Fission yeast).